Reading from the N-terminus, the 109-residue chain is Nucleoid-associated protein Shal_1591 (109 aa).

Positions 87 to 109 (NQKEKMAEVTGGMQLPPGMKMPF) are disordered.

The protein belongs to the YbaB/EbfC family. As to quaternary structure, homodimer.

Its subcellular location is the cytoplasm. The protein resides in the nucleoid. In terms of biological role, binds to DNA and alters its conformation. May be involved in regulation of gene expression, nucleoid organization and DNA protection. This is Nucleoid-associated protein Shal_1591 from Shewanella halifaxensis (strain HAW-EB4).